The sequence spans 354 residues: Histidinol-phosphate aminotransferase (354 aa).

Lysine 222 carries the N6-(pyridoxal phosphate)lysine modification.

The protein belongs to the class-II pyridoxal-phosphate-dependent aminotransferase family. Histidinol-phosphate aminotransferase subfamily. As to quaternary structure, homodimer. The cofactor is pyridoxal 5'-phosphate.

The enzyme catalyses L-histidinol phosphate + 2-oxoglutarate = 3-(imidazol-4-yl)-2-oxopropyl phosphate + L-glutamate. The protein operates within amino-acid biosynthesis; L-histidine biosynthesis; L-histidine from 5-phospho-alpha-D-ribose 1-diphosphate: step 7/9. The chain is Histidinol-phosphate aminotransferase from Staphylococcus carnosus (strain TM300).